Reading from the N-terminus, the 239-residue chain is Increased recombination centers protein 22-1 (239 aa).

The first 19 residues, Met1 to Gly19, serve as a signal peptide directing secretion. Residues Tyr20–Leu161 are Lumenal-facing. The chain crosses the membrane as a helical span at residues Ile162 to Ile182. Over Trp183–Asn239 the chain is Cytoplasmic. Residues Ala201–Ser213 show a composition bias toward low complexity. The interval Ala201 to Thr222 is disordered.

The protein belongs to the IRC22 family.

It localises to the endoplasmic reticulum membrane. Its function is as follows. Is probably involved in a pathway contributing to genomic integrity. The protein is Increased recombination centers protein 22-1 (IRC22-1) of Candida albicans (strain WO-1) (Yeast).